The chain runs to 249 residues: DNA polymerase sliding clamp (249 aa).

Belongs to the PCNA family. Homotrimer. The subunits circularize to form a toroid; DNA passes through its center. Replication factor C (RFC) is required to load the toroid on the DNA.

Sliding clamp subunit that acts as a moving platform for DNA processing. Responsible for tethering the catalytic subunit of DNA polymerase and other proteins to DNA during high-speed replication. The chain is DNA polymerase sliding clamp from Thermococcus gammatolerans (strain DSM 15229 / JCM 11827 / EJ3).